The chain runs to 194 residues: dTTP/UTP pyrophosphatase (194 aa).

Asp73 serves as the catalytic Proton acceptor.

Belongs to the Maf family. YhdE subfamily. A divalent metal cation serves as cofactor.

Its subcellular location is the cytoplasm. The enzyme catalyses dTTP + H2O = dTMP + diphosphate + H(+). It catalyses the reaction UTP + H2O = UMP + diphosphate + H(+). Nucleoside triphosphate pyrophosphatase that hydrolyzes dTTP and UTP. May have a dual role in cell division arrest and in preventing the incorporation of modified nucleotides into cellular nucleic acids. The polypeptide is dTTP/UTP pyrophosphatase (Clostridium botulinum (strain Kyoto / Type A2)).